Here is a 140-residue protein sequence, read N- to C-terminus: MANRTIIAFDFGTKSIGVAIGQEVTGTARALTAFKAQDGTPDWQQVEKLLKEWQPNLVVVGLPLNMDGTEQPLTARARRFANRLHGRFGVQVALQDERLSTVEARANLFDRGGYRALDKGSVDAASAVIILESWFDEQAG.

The protein belongs to the YqgF nuclease family.

It localises to the cytoplasm. Its function is as follows. Could be a nuclease involved in processing of the 5'-end of pre-16S rRNA. The chain is Putative pre-16S rRNA nuclease from Yersinia pseudotuberculosis serotype O:1b (strain IP 31758).